The following is a 201-amino-acid chain: Orotate phosphoribosyltransferase (201 aa).

113-121 (EDIITTGKS) is a binding site for 5-phospho-alpha-D-ribose 1-diphosphate. Residues Thr117 and Arg145 each coordinate orotate.

Belongs to the purine/pyrimidine phosphoribosyltransferase family. PyrE subfamily. Homodimer. It depends on Mg(2+) as a cofactor.

The catalysed reaction is orotidine 5'-phosphate + diphosphate = orotate + 5-phospho-alpha-D-ribose 1-diphosphate. Its pathway is pyrimidine metabolism; UMP biosynthesis via de novo pathway; UMP from orotate: step 1/2. Functionally, catalyzes the transfer of a ribosyl phosphate group from 5-phosphoribose 1-diphosphate to orotate, leading to the formation of orotidine monophosphate (OMP). In Helicobacter pylori (strain HPAG1), this protein is Orotate phosphoribosyltransferase.